Consider the following 513-residue polypeptide: GMP synthase [glutamine-hydrolyzing] (513 aa).

The Glutamine amidotransferase type-1 domain maps to 9–198 (LILVLDFGSQ…VRRVCDCKGQ (190 aa)). Cys86 functions as the Nucleophile in the catalytic mechanism. Residues His172 and Glu174 contribute to the active site. Residues 199–388 (WTMENFIEIE…LGIPEHLVWR (190 aa)) form the GMPS ATP-PPase domain. 226–232 (SGGVDSS) is a binding site for ATP.

Homodimer.

It catalyses the reaction XMP + L-glutamine + ATP + H2O = GMP + L-glutamate + AMP + diphosphate + 2 H(+). It functions in the pathway purine metabolism; GMP biosynthesis; GMP from XMP (L-Gln route): step 1/1. Functionally, catalyzes the synthesis of GMP from XMP. In Staphylococcus aureus (strain Mu3 / ATCC 700698), this protein is GMP synthase [glutamine-hydrolyzing].